Here is a 561-residue protein sequence, read N- to C-terminus: Malate synthase, glyoxysomal (561 aa).

Catalysis depends on R177, which acts as the Proton acceptor. D462 serves as the catalytic Proton donor. The Microbody targeting signal motif lies at 559–561 (SRL).

This sequence belongs to the malate synthase family.

It localises to the glyoxysome. The catalysed reaction is glyoxylate + acetyl-CoA + H2O = (S)-malate + CoA + H(+). It participates in carbohydrate metabolism; glyoxylate cycle; (S)-malate from isocitrate: step 2/2. The sequence is that of Malate synthase, glyoxysomal from Brassica napus (Rape).